Here is a 159-residue protein sequence, read N- to C-terminus: Lipoprotein LpqH (159 aa).

An N-terminal signal peptide occupies residues 1–21; that stretch reads MKRGLTVAVAGAAILVAGLSG. Residue C22 is the site of N-palmitoyl cysteine attachment. Residue C22 is the site of S-diacylglycerol cysteine attachment. Positions 24-51 are disordered; that stretch reads SNKSTTGSGETTTAAGTTASPGAASGPK. Over residues 27-49 the composition is skewed to low complexity; that stretch reads STTGSGETTTAAGTTASPGAASG.

This sequence belongs to the mycobacterial 19 kDa antigen family. Modified by Lgt on Cys-22 with an S-linked diacylglycerol with a mixture of C16, C18 and C19 fatty acids, signal peptide is removed by LspA, modifed by Lnt with an amide-linked mixture of C16 and C19 fatty acids.

It is found in the cell membrane. Its function is as follows. Might be involved in ligand transport. A host TLR2 agonist, modifies host gene expression in response to pathogen. The chain is Lipoprotein LpqH (lpqH) from Mycobacterium tuberculosis (strain CDC 1551 / Oshkosh).